Reading from the N-terminus, the 248-residue chain is Cutinase (248 aa).

An N-terminal signal peptide occupies residues 1 to 17; it reads MRSLAILTTLLAGHAFA. Residues 18 to 28 constitute a propeptide that is removed on maturation; that stretch reads YPKPAPQSVNR. Positions 31–70 are lid covering the active site of the uncomplexed enzyme; that stretch reads WPSINEFLSELAKVMPIGDTITAACDLISDGEDAAASLFG. 2 cysteine pairs are disulfide-bonded: cysteine 55/cysteine 91 and cysteine 79/cysteine 153. Serine 164 functions as the Nucleophile in the catalytic mechanism. The cysteines at positions 212 and 219 are disulfide-linked. Aspartate 216 is a catalytic residue. Catalysis depends on histidine 229, which acts as the Proton donor/acceptor.

It belongs to the cutinase family.

The protein localises to the secreted. It carries out the reaction cutin + H2O = cutin monomers.. With respect to regulation, weakly inhibited by n-undecyl phosphonate (C11Y4). Activity unaffected by paraoxon. Its function is as follows. Catalyzes the hydrolysis of complex carboxylic polyesters found in the cell wall of plants. Degrades cutin, a macromolecule that forms the structure of the plant cuticle. The sequence is that of Cutinase from Hypocrea jecorina (strain QM6a) (Trichoderma reesei).